The sequence spans 97 residues: Sugar transporter SemiSWEET (97 aa).

In terms of domain architecture, PQ-loop spans 4 to 70 (IERIGKALEP…IYGIYHKNPT (67 aa)). 3 helical membrane passes run 15 to 35 (MLVMGLISPLATMPQLYKLYV), 44 to 65 (LSLTTWLLYSFIALLWTIYGIY), and 71 to 91 (IWVGNCLGFLMYVAMVVGIIA).

Homodimer.

The protein localises to the cell membrane. The homodimer mediates transmembrane sugar transport down a concentration gradient. Transport is probably effected by rocking-type movements, where a cargo-binding cavity opens first on one and then on the other side of the membrane. The chain is Sugar transporter SemiSWEET from Vibrio sp. (strain N418).